We begin with the raw amino-acid sequence, 979 residues long: Putative transcription initiation factor TFIID 111 kDa subunit (979 aa).

Ser244 is modified (phosphoserine).

As to quaternary structure, TFIID is composed of TATA binding protein (TBP) and a number of TBP-associated factors (TAFs).

Its subcellular location is the nucleus. Its function is as follows. TAFs are components of the transcription factor IID (TFIID) complex that are essential for mediating regulation of RNA polymerase transcription. This is Putative transcription initiation factor TFIID 111 kDa subunit from Schizosaccharomyces pombe (strain 972 / ATCC 24843) (Fission yeast).